The sequence spans 739 residues: MKKSTIPTLSALTLAMSLAFGGSVIAQEQVTDNQFWWPEQLNLSPLRQNAVESNPYGSDYHYAEAFKSLDLDAVKKDIKALMTESQDWWPADYGHYGPFFIRMAWHSAGVYRIFDGRGGAAGGQQRFEPLNSWPDNVNLDKARRLLWPIKQKYGSKISWGDLMVLTGNVALESMGFKTFGFAGGRVDDWEAEQVNWGSEKAWLDSKRRNEKGELAKPMGATQMGLIYVNPEGPNGVPDPLASAKEIRDTFGRMAMNDEETVALIAGGHTFGKAHGAHDPSKCVGADPAASGVEAQGLGWKNKCGKGHSEDTVTSGLEGAWSSNPTKWTMEYLTWLYTFDWVQTKSPAGHIQWTPADDKAANLVPDAHLPDKRHAPMMFTSDIALKEDPIYREITTRFLKNPQEFELAFAKAWFKLTHRDMGPKARYLGADVPAEMLIWQDPIPALDHPVIDNADIKALGNKILASGLTVPELVRTAWASASSFRGTDMRGGANGARIRLEPMMNWQANNPKELAKVLAKLEKVQKDFNGSLKGGKKVSLADVIVLGGSVAVEKAAKEAGVTVSVPFTPGRMDATQAQTDVSSFAVLEPTADGFRNYYSKDSSHSPAEMLIERANMLNLTVPEMTVLVGGLRALGANSAGVKHGVFTDKPGTLSNDFFVNLLDMSTKWSKSEKQEGIYEGQDRKSGKLKWTATPVDLVFGSHSELRAVSEVYGAQDGQDRFVQDFIKAWNKVMNADRFDI.

The first 26 residues, 1-26, serve as a signal peptide directing secretion; that stretch reads MKKSTIPTLSALTLAMSLAFGGSVIA. Positions 105-227 form a cross-link, tryptophyl-tyrosyl-methioninium (Trp-Tyr) (with M-253); it reads WHSAGVYRIF…MGATQMGLIY (123 aa). Residue His-106 is the Proton acceptor of the active site. A cross-link (tryptophyl-tyrosyl-methioninium (Tyr-Met) (with W-105)) is located at residues 227–253; the sequence is YVNPEGPNGVPDPLASAKEIRDTFGRM. Heme b is bound at residue His-268.

The protein belongs to the peroxidase family. Peroxidase/catalase subfamily. In terms of assembly, homodimer or homotetramer. Requires heme b as cofactor. Formation of the three residue Trp-Tyr-Met cross-link is important for the catalase, but not the peroxidase activity of the enzyme.

The catalysed reaction is H2O2 + AH2 = A + 2 H2O. The enzyme catalyses 2 H2O2 = O2 + 2 H2O. Bifunctional enzyme with both catalase and broad-spectrum peroxidase activity. The chain is Catalase-peroxidase 2 from Shewanella sp. (strain MR-7).